Reading from the N-terminus, the 353-residue chain is Photosystem II D2 protein (353 aa).

Threonine 2 is modified (N-acetylthreonine). Position 2 is a phosphothreonine (threonine 2). The chain crosses the membrane as a helical span at residues 41–61; it reads CAYFALGGWFTGTTFVTSWYT. Histidine 118 is a binding site for chlorophyll a. Residues 125–141 traverse the membrane as a helical segment; that stretch reads GFMLRQFELARSVQLRP. The pheophytin a site is built by glutamine 130 and asparagine 143. Residues 153–166 form a helical membrane-spanning segment; that stretch reads VFISVFFIYPLGQS. Histidine 198 contributes to the chlorophyll a binding site. The helical transmembrane segment at 208-228 threads the bilayer; sequence AALLCAIHGATVENTLFEDGD. Residues histidine 215 and phenylalanine 262 each coordinate a plastoquinone. Position 215 (histidine 215) interacts with Fe cation. Histidine 269 is a binding site for Fe cation. Residues 279–295 form a helical membrane-spanning segment; sequence GLWMSALGVVGLALNLR.

This sequence belongs to the reaction center PufL/M/PsbA/D family. PSII is composed of 1 copy each of membrane proteins PsbA, PsbB, PsbC, PsbD, PsbE, PsbF, PsbH, PsbI, PsbJ, PsbK, PsbL, PsbM, PsbT, PsbX, PsbY, PsbZ, Psb30/Ycf12, at least 3 peripheral proteins of the oxygen-evolving complex and a large number of cofactors. It forms dimeric complexes. The cofactor is The D1/D2 heterodimer binds P680, chlorophylls that are the primary electron donor of PSII, and subsequent electron acceptors. It shares a non-heme iron and each subunit binds pheophytin, quinone, additional chlorophylls, carotenoids and lipids. There is also a Cl(-1) ion associated with D1 and D2, which is required for oxygen evolution. The PSII complex binds additional chlorophylls, carotenoids and specific lipids..

It is found in the plastid membrane. It catalyses the reaction 2 a plastoquinone + 4 hnu + 2 H2O = 2 a plastoquinol + O2. Functionally, photosystem II (PSII) is a light-driven water:plastoquinone oxidoreductase that uses light energy to abstract electrons from H(2)O, generating O(2) and a proton gradient subsequently used for ATP formation. It consists of a core antenna complex that captures photons, and an electron transfer chain that converts photonic excitation into a charge separation. The D1/D2 (PsbA/PsbD) reaction center heterodimer binds P680, the primary electron donor of PSII as well as several subsequent electron acceptors. D2 is needed for assembly of a stable PSII complex. In Cuscuta reflexa (Southern Asian dodder), this protein is Photosystem II D2 protein.